The chain runs to 231 residues: Probable GTP-binding protein EngB (231 aa).

Positions 51-231 (DLSEIAFAGR…RAQLAALASP (181 aa)) constitute an EngB-type G domain. Residues 59 to 66 (GRSNVGKS), 86 to 90 (GRTQE), 109 to 112 (DLPG), 176 to 179 (TKAD), and 210 to 212 (TSS) each bind GTP. Positions 66 and 88 each coordinate Mg(2+).

The protein belongs to the TRAFAC class TrmE-Era-EngA-EngB-Septin-like GTPase superfamily. EngB GTPase family. It depends on Mg(2+) as a cofactor.

Necessary for normal cell division and for the maintenance of normal septation. This is Probable GTP-binding protein EngB from Rhodospirillum rubrum (strain ATCC 11170 / ATH 1.1.1 / DSM 467 / LMG 4362 / NCIMB 8255 / S1).